The chain runs to 378 residues: 2-aminoethylphosphonate--pyruvate transaminase 1 (378 aa).

Position 194 is an N6-(pyridoxal phosphate)lysine (lysine 194).

It belongs to the class-V pyridoxal-phosphate-dependent aminotransferase family. PhnW subfamily. In terms of assembly, homodimer. Pyridoxal 5'-phosphate is required as a cofactor.

The catalysed reaction is (2-aminoethyl)phosphonate + pyruvate = phosphonoacetaldehyde + L-alanine. In terms of biological role, involved in phosphonate degradation. This is 2-aminoethylphosphonate--pyruvate transaminase 1 from Cupriavidus pinatubonensis (strain JMP 134 / LMG 1197) (Cupriavidus necator (strain JMP 134)).